A 1382-amino-acid polypeptide reads, in one-letter code: DNA-directed RNA polymerase subunit beta (1382 aa).

Belongs to the RNA polymerase beta chain family. In terms of assembly, the RNAP catalytic core consists of 2 alpha, 1 beta, 1 beta' and 1 omega subunit. When a sigma factor is associated with the core the holoenzyme is formed, which can initiate transcription.

It carries out the reaction RNA(n) + a ribonucleoside 5'-triphosphate = RNA(n+1) + diphosphate. DNA-dependent RNA polymerase catalyzes the transcription of DNA into RNA using the four ribonucleoside triphosphates as substrates. In Paracoccus denitrificans (strain Pd 1222), this protein is DNA-directed RNA polymerase subunit beta.